Here is a 333-residue protein sequence, read N- to C-terminus: Mevalonate kinase (333 aa).

109–119 is an ATP binding site; that stretch reads PVGAGLGSSAA. D160 acts as the Proton acceptor in catalysis.

The protein belongs to the GHMP kinase family. Mevalonate kinase subfamily. As to quaternary structure, homodimer. Requires Mg(2+) as cofactor.

The protein localises to the cytoplasm. It catalyses the reaction (R)-mevalonate + ATP = (R)-5-phosphomevalonate + ADP + H(+). It participates in isoprenoid biosynthesis; isopentenyl diphosphate biosynthesis via mevalonate pathway; isopentenyl diphosphate from (R)-mevalonate: step 1/3. In terms of biological role, catalyzes the phosphorylation of (R)-mevalonate (MVA) to (R)-mevalonate 5-phosphate (MVAP). Functions in the mevalonate (MVA) pathway leading to isopentenyl diphosphate (IPP), a key precursor for the biosynthesis of isoprenoid compounds such as archaeal membrane lipids. The polypeptide is Mevalonate kinase (Thermococcus sibiricus (strain DSM 12597 / MM 739)).